The sequence spans 188 residues: UPF0488 protein C8orf33 homolog (188 aa).

Disordered stretches follow at residues 1–65, 87–112, and 144–182; these read MAAP…AEAQ, QRPT…TPLP, and AHSA…RDEE. Position 2 is an N-acetylalanine (alanine 2). Serine 41 carries the post-translational modification Phosphoserine. The span at 166–182 shows a compositional bias: basic and acidic residues; the sequence is PRPEGRSKGTSDTRDEE.

Belongs to the UPF0488 family.

The polypeptide is UPF0488 protein C8orf33 homolog (Bos taurus (Bovine)).